A 240-amino-acid polypeptide reads, in one-letter code: NAD(P)H-hydrate epimerase (240 aa).

The YjeF N-terminal domain maps to 15-224 (AQEIDAELMG…SYNLKLPCYP (210 aa)). 66–70 (NQGGD) is a (6S)-NADPHX binding site. K(+) is bound by residues Q67 and D129. (6S)-NADPHX is bound by residues 133–139 (GFSFHSE) and D162. S165 lines the K(+) pocket.

It belongs to the NnrE/AIBP family. The cofactor is K(+).

The protein localises to the cytoplasm. Its subcellular location is the mitochondrion. It catalyses the reaction (6R)-NADHX = (6S)-NADHX. It carries out the reaction (6R)-NADPHX = (6S)-NADPHX. Its function is as follows. Catalyzes the epimerization of the S- and R-forms of NAD(P)HX, a damaged form of NAD(P)H that is a result of enzymatic or heat-dependent hydration. This is a prerequisite for the S-specific NAD(P)H-hydrate dehydratase to allow the repair of both epimers of NAD(P)HX. The sequence is that of NAD(P)H-hydrate epimerase from Puccinia graminis f. sp. tritici (strain CRL 75-36-700-3 / race SCCL) (Black stem rust fungus).